A 210-amino-acid polypeptide reads, in one-letter code: Protein GrpE (210 aa).

Positions methionine 1–alanine 42 are disordered.

The protein belongs to the GrpE family. As to quaternary structure, homodimer.

The protein resides in the cytoplasm. Participates actively in the response to hyperosmotic and heat shock by preventing the aggregation of stress-denatured proteins, in association with DnaK and GrpE. It is the nucleotide exchange factor for DnaK and may function as a thermosensor. Unfolded proteins bind initially to DnaJ; upon interaction with the DnaJ-bound protein, DnaK hydrolyzes its bound ATP, resulting in the formation of a stable complex. GrpE releases ADP from DnaK; ATP binding to DnaK triggers the release of the substrate protein, thus completing the reaction cycle. Several rounds of ATP-dependent interactions between DnaJ, DnaK and GrpE are required for fully efficient folding. In Nitrosococcus oceani (strain ATCC 19707 / BCRC 17464 / JCM 30415 / NCIMB 11848 / C-107), this protein is Protein GrpE.